The following is a 310-amino-acid chain: Upstream stimulatory factor 1 (310 aa).

Residues 1 to 17 (MKGQQKTAETEEGTVQI) show a composition bias toward polar residues. 2 disordered regions span residues 1–26 (MKGQ…ATGE) and 171–209 (QGGS…EVER). Basic and acidic residues predominate over residues 190–209 (EAPRTTRDEKRRAQHNEVER). One can recognise a bHLH domain in the interval 199 to 254 (KRRAQHNEVERRRRDKINNWIVQLSKIIPDCSMESTKSGQSKGGILSKACDYIQEL). Residues 271 to 292 (LQLDNDVLRQQVEDLKNKNLLL) are leucine-zipper. K306 participates in a covalent cross-link: Glycyl lysine isopeptide (Lys-Gly) (interchain with G-Cter in SUMO2).

In terms of assembly, efficient DNA binding requires dimerization with another bHLH protein. Binds DNA as a homodimer or a heterodimer (USF1/USF2).

Its subcellular location is the nucleus. Functionally, transcription factor that binds to a symmetrical DNA sequence (E-boxes) (5'-CACGTG-3') that is found in a variety of viral and cellular promoters. This chain is Upstream stimulatory factor 1 (USF1), found in Bos taurus (Bovine).